Consider the following 240-residue polypeptide: Endonuclease NucS 1 (240 aa).

The protein belongs to the NucS endonuclease family.

Its subcellular location is the cytoplasm. Functionally, cleaves both 3' and 5' ssDNA extremities of branched DNA structures. The sequence is that of Endonuclease NucS 1 from Halobacterium salinarum (strain ATCC 700922 / JCM 11081 / NRC-1) (Halobacterium halobium).